A 1267-amino-acid chain; its full sequence is Probable cation-transporting ATPase catp-6 (1267 aa).

Residues 1–32 (MVEAGGARRHRMTLESGDHTLTLFAYRTGPFR) are Extracellular-facing. A helical membrane pass occupies residues 33 to 53 (TILFYALTVLTLGIFRLILHW). Residues 54–189 (KQKWDVKMRM…RNEIVVQLRP (136 aa)) lie on the Cytoplasmic side of the membrane. Residues 190 to 210 (ILYLLVMEVITPFYVFQIFSV) traverse the membrane as a helical segment. Residues 211–217 (TVWYNDE) are Extracellular-facing. A helical membrane pass occupies residues 218-238 (YAYYASLIVILSLGSIVMDVY). Residues 239–390 (QIRTQEIRLR…DFRFTKDLFK (152 aa)) are Cytoplasmic-facing. A helical transmembrane segment spans residues 391 to 411 (FILFLACISGCGFIYTIIVMI). Residues 412 to 424 (MRGNTLRRIIVRS) lie on the Extracellular side of the membrane. The chain crosses the membrane as a helical span at residues 425-445 (LDIITITVPPALPAAMSVGII). At 446-950 (NAQLRLKKKE…VTSFGIFKYM (505 aa)) the chain is on the cytoplasmic side. Asp-476 functions as the 4-aspartylphosphate intermediate in the catalytic mechanism. Mg(2+) is bound by residues Asp-891 and Asp-895. Residues 951–971 (AGYSLTQFVTVMHLYWISNIL) traverse the membrane as a helical segment. At 972–976 (TDGQF) the chain is on the extracellular side. Residues 977-997 (MYIDMFLITMFALLFGNTPAF) form a helical membrane-spanning segment. At 998 to 1013 (YRLAHTPPPTRLLSIA) the chain is on the cytoplasmic side. The chain crosses the membrane as a helical span at residues 1014-1034 (SMTSVVGQLIIIGVVQFIVFF). Residues 1035 to 1058 (STSQQPWFTPYQPPVDDEVEDKRS) are Extracellular-facing. Residues 1059-1079 (MQGTALFCVSMFQYIILALVY) form a helical membrane-spanning segment. Topologically, residues 1080 to 1097 (SKGPPFRGNLWSNKPMCA) are cytoplasmic. A helical membrane pass occupies residues 1098 to 1118 (LTIFATLLCLFIVIWPTELVL). Residues 1119 to 1132 (KTLGNVELPSLTFR) are Extracellular-facing. The helical transmembrane segment at 1133–1153 (IFIVIVGAVNAAVSYGFETLF) threads the bilayer. The Cytoplasmic segment spans residues 1154–1267 (VDFFLLGYWE…EEPEKLERTY (114 aa)). The interval 1232–1256 (ERLISRIGGEPTWLTNPIPPHSLSE) is disordered.

Belongs to the cation transport ATPase (P-type) (TC 3.A.3) family. Type V subfamily.

Its subcellular location is the membrane. It catalyses the reaction ATP + H2O = ADP + phosphate + H(+). This Caenorhabditis elegans protein is Probable cation-transporting ATPase catp-6.